Here is an 89-residue protein sequence, read N- to C-terminus: Small ribosomal subunit protein uS14A (89 aa).

This sequence belongs to the universal ribosomal protein uS14 family. In terms of assembly, part of the 30S ribosomal subunit. Contacts proteins S3 and S10.

Binds 16S rRNA, required for the assembly of 30S particles and may also be responsible for determining the conformation of the 16S rRNA at the A site. The polypeptide is Small ribosomal subunit protein uS14A (Streptococcus equi subsp. zooepidemicus (strain MGCS10565)).